Consider the following 415-residue polypeptide: Serine hydroxymethyltransferase (415 aa).

Residues Leu-122 and 126-128 each bind (6S)-5,6,7,8-tetrahydrofolate; that span reads GHL. Lys-230 bears the N6-(pyridoxal phosphate)lysine mark.

It belongs to the SHMT family. Homodimer. Pyridoxal 5'-phosphate is required as a cofactor.

It localises to the cytoplasm. It catalyses the reaction (6R)-5,10-methylene-5,6,7,8-tetrahydrofolate + glycine + H2O = (6S)-5,6,7,8-tetrahydrofolate + L-serine. It functions in the pathway one-carbon metabolism; tetrahydrofolate interconversion. Its pathway is amino-acid biosynthesis; glycine biosynthesis; glycine from L-serine: step 1/1. Its function is as follows. Catalyzes the reversible interconversion of serine and glycine with tetrahydrofolate (THF) serving as the one-carbon carrier. This reaction serves as the major source of one-carbon groups required for the biosynthesis of purines, thymidylate, methionine, and other important biomolecules. Also exhibits THF-independent aldolase activity toward beta-hydroxyamino acids, producing glycine and aldehydes, via a retro-aldol mechanism. This Ralstonia pickettii (strain 12J) protein is Serine hydroxymethyltransferase.